A 123-amino-acid chain; its full sequence is Small ribosomal subunit protein uS12 (123 aa).

The disordered stretch occupies residues 1 to 28; the sequence is MPTIQQLIRTERSKVQKKTKSPALKQCP. Residue aspartate 89 is modified to 3-methylthioaspartic acid. The interval 104–123 is disordered; sequence ATGVKDRKQGRSKYGTKRPK. Basic residues predominate over residues 113-123; the sequence is GRSKYGTKRPK.

The protein belongs to the universal ribosomal protein uS12 family. In terms of assembly, part of the 30S ribosomal subunit. Contacts proteins S8 and S17. May interact with IF1 in the 30S initiation complex.

Its function is as follows. With S4 and S5 plays an important role in translational accuracy. Functionally, interacts with and stabilizes bases of the 16S rRNA that are involved in tRNA selection in the A site and with the mRNA backbone. Located at the interface of the 30S and 50S subunits, it traverses the body of the 30S subunit contacting proteins on the other side and probably holding the rRNA structure together. The combined cluster of proteins S8, S12 and S17 appears to hold together the shoulder and platform of the 30S subunit. The sequence is that of Small ribosomal subunit protein uS12 from Gloeothece citriformis (strain PCC 7424) (Cyanothece sp. (strain PCC 7424)).